Here is a 200-residue protein sequence, read N- to C-terminus: LexA repressor (200 aa).

Positions 28–48 form a DNA-binding region, H-T-H motif; sequence RAEIARILGFKSANAAEEHIK. Active-site for autocatalytic cleavage activity residues include S118 and K155.

The protein belongs to the peptidase S24 family. In terms of assembly, homodimer.

The catalysed reaction is Hydrolysis of Ala-|-Gly bond in repressor LexA.. Represses a number of genes involved in the response to DNA damage (SOS response), including recA and lexA. In the presence of single-stranded DNA, RecA interacts with LexA causing an autocatalytic cleavage which disrupts the DNA-binding part of LexA, leading to derepression of the SOS regulon and eventually DNA repair. The chain is LexA repressor from Cellvibrio japonicus (strain Ueda107) (Pseudomonas fluorescens subsp. cellulosa).